We begin with the raw amino-acid sequence, 142 residues long: Peptide methionine sulfoxide reductase MsrB (142 aa).

Residues 2-125 (LKKDKSELTD…NSAAIQFIPY (124 aa)) form the MsrB domain. Cys114 (nucleophile) is an active-site residue.

It belongs to the MsrB Met sulfoxide reductase family.

The catalysed reaction is L-methionyl-[protein] + [thioredoxin]-disulfide + H2O = L-methionyl-(R)-S-oxide-[protein] + [thioredoxin]-dithiol. The polypeptide is Peptide methionine sulfoxide reductase MsrB (Staphylococcus aureus (strain USA300)).